The chain runs to 270 residues: Formamidopyrimidine-DNA glycosylase (270 aa).

P2 serves as the catalytic Schiff-base intermediate with DNA. Residue E3 is the Proton donor of the active site. K58 serves as the catalytic Proton donor; for beta-elimination activity. The DNA site is built by H90, R109, and R152. The FPG-type zinc-finger motif lies at 237–270 (RVYGREGEACECGGAIVRVVQSGRSTFYCRKCQR). Catalysis depends on R260, which acts as the Proton donor; for delta-elimination activity.

This sequence belongs to the FPG family. As to quaternary structure, monomer. It depends on Zn(2+) as a cofactor.

The catalysed reaction is Hydrolysis of DNA containing ring-opened 7-methylguanine residues, releasing 2,6-diamino-4-hydroxy-5-(N-methyl)formamidopyrimidine.. It catalyses the reaction 2'-deoxyribonucleotide-(2'-deoxyribose 5'-phosphate)-2'-deoxyribonucleotide-DNA = a 3'-end 2'-deoxyribonucleotide-(2,3-dehydro-2,3-deoxyribose 5'-phosphate)-DNA + a 5'-end 5'-phospho-2'-deoxyribonucleoside-DNA + H(+). Functionally, involved in base excision repair of DNA damaged by oxidation or by mutagenic agents. Acts as a DNA glycosylase that recognizes and removes damaged bases. Has a preference for oxidized purines, such as 7,8-dihydro-8-oxoguanine (8-oxoG). Has AP (apurinic/apyrimidinic) lyase activity and introduces nicks in the DNA strand. Cleaves the DNA backbone by beta-delta elimination to generate a single-strand break at the site of the removed base with both 3'- and 5'-phosphates. The sequence is that of Formamidopyrimidine-DNA glycosylase from Sphingopyxis alaskensis (strain DSM 13593 / LMG 18877 / RB2256) (Sphingomonas alaskensis).